The following is a 446-amino-acid chain: FAD-dependent monooxygenase eupB (446 aa).

Residues 10–30 (EPHIAIVGGGIVGVILTLGLL) form a helical membrane-spanning segment. An N-linked (GlcNAc...) asparagine glycan is attached at N33. Residues E40, A53, and R125 each coordinate FAD. Residues R206 and Y239 contribute to the active site. Residue N243 is glycosylated (N-linked (GlcNAc...) asparagine). 2 residues coordinate FAD: D322 and A335. Residue N395 is glycosylated (N-linked (GlcNAc...) asparagine).

The protein belongs to the paxM FAD-dependent monooxygenase family. Requires FAD as cofactor.

The protein localises to the membrane. Its pathway is secondary metabolite biosynthesis; terpenoid biosynthesis. Its function is as follows. FAD-dependent monooxygenase; part of the gene cluster that mediates the biosynthesis of eupenifeldin, a bistropolone meroterpenoid that acts as an antitumor agent. The first step of eupenifeldin biosynthesis is the biosynthesis of 3-methylorcinaldehyde performed by the non-reducing polyketide synthase eupA. Oxidative dearomatization of 3-methylorcinaldehyde likely catalyzed by the FAD-dependent monooxygenase eupB is followed by oxidative ring expansion by the 2-oxoglutarate-dependent dioxygenase eupC to provide the first tropolone metabolite, tropolone stipitaldehyde. In parallel, generation of sesquiterpene alpha-humulene from farnesylpyrophosphate (FPP) is catalyzed by the terpene cyclase eupE. The cytochrome P450 monooxygenase eupD then hydroxylates humulene to humulenol. The putative Diels-Alderase eupF probably catalyzes the formation of the tropolone-humulene skeleton by linking humulenol and the polyketide moiety. The short-chain dehydrogenase/reductase eupG and the flavin-dependent monooxygenase eupH are also essential for eupenifeldin biosynthesis and are likely the additional decorating enzymes of the tropolone-humulene skeleton to produce final eupenifeldin or derivatives. This Phoma sp protein is FAD-dependent monooxygenase eupB.